The primary structure comprises 307 residues: Acetaldehyde dehydrogenase (307 aa).

Residue 12-15 coordinates NAD(+); sequence SGNI. Cys130 serves as the catalytic Acyl-thioester intermediate. NAD(+) is bound by residues 161-169 and Asn272; that span reads SVGPGTRQN.

The protein belongs to the acetaldehyde dehydrogenase family.

The catalysed reaction is acetaldehyde + NAD(+) + CoA = acetyl-CoA + NADH + H(+). The sequence is that of Acetaldehyde dehydrogenase from Shewanella pealeana (strain ATCC 700345 / ANG-SQ1).